Consider the following 131-residue polypeptide: UPF0102 protein YraN (131 aa).

The span at 1 to 19 shows a compositional bias: polar residues; the sequence is MATVPTRSGSPRQLTTKQT. Residues 1-20 are disordered; sequence MATVPTRSGSPRQLTTKQTG.

Belongs to the UPF0102 family.

The chain is UPF0102 protein YraN from Escherichia coli O17:K52:H18 (strain UMN026 / ExPEC).